Here is a 68-residue protein sequence, read N- to C-terminus: Alpha-conotoxin PIVA (68 aa).

Positions 1-16 (MFTVFLLVVLATTVVS) are cleaved as a signal peptide. A propeptide spanning residues 17–41 (FTSDRASDDRNTNDKASRLLSHVVR) is cleaved from the precursor. Cystine bridges form between cysteine 43/cysteine 57, cysteine 44/cysteine 52, and cysteine 55/cysteine 64. 2 positions are modified to 4-hydroxyproline; partial: proline 48 and proline 54. Proline 61 bears the 4-hydroxyproline mark. Glutamine 66 is subject to Glutamine amide.

It belongs to the conotoxin A superfamily. Expressed by the venom duct.

It is found in the secreted. Its function is as follows. Alpha-conotoxins act on postsynaptic membranes, they bind to the nicotinic acetylcholine receptors (nAChR) and thus inhibit them. This toxin has higher affinity for the adult subtype (alpha-1-beta-1-gamma-delta (CHRNA1-CHRNB1-CHRNG-CHRND) subunits) (IC(50)=2.3 nM) of the receptor than for the fetal subtype (alpha-1-beta-1-epsilon-delta (CHRNA1-CHRNB1-CHRND-CHRNE) subunits) (IC(50)=22 nM). This Conus purpurascens (Purple cone) protein is Alpha-conotoxin PIVA.